The following is a 286-amino-acid chain: Elongation factor Ts (286 aa).

Residues 79-82 form an involved in Mg(2+) ion dislocation from EF-Tu region; that stretch reads TDFV.

Belongs to the EF-Ts family.

Its subcellular location is the cytoplasm. Functionally, associates with the EF-Tu.GDP complex and induces the exchange of GDP to GTP. It remains bound to the aminoacyl-tRNA.EF-Tu.GTP complex up to the GTP hydrolysis stage on the ribosome. The polypeptide is Elongation factor Ts (Wolbachia pipientis wMel).